A 396-amino-acid chain; its full sequence is DNA-directed RNA polymerase subunit 6 (396 aa).

2 disordered regions span residues 1 to 137 and 290 to 396; these read MSSK…DIED and NQQK…DYSE. 3 stretches are compositionally biased toward acidic residues: residues 21 to 53, 76 to 88, and 97 to 137; these read EYYD…DDEN, IDPD…DTDG, and EMGE…DIED. Over residues 290-312 the composition is skewed to polar residues; the sequence is NQQKNSTTDTETLSTQENASTRV. Composition is skewed to low complexity over residues 313-338 and 346-366; these read SGSN…SKSN and NSRT…SRTG. Residues 367 to 380 show a composition bias toward basic residues; the sequence is SKSKKSSNTKSKSK. Over residues 385-396 the composition is skewed to acidic residues; that stretch reads NSDDSDYSDYSE.

This sequence belongs to the archaeal Rpo6/eukaryotic RPB6 RNA polymerase subunit family.

It catalyses the reaction RNA(n) + a ribonucleoside 5'-triphosphate = RNA(n+1) + diphosphate. Functionally, DNA-dependent RNA polymerase catalyzes the transcription of DNA into RNA using the four ribonucleoside triphosphates as substrates. The chain is DNA-directed RNA polymerase subunit 6 from Acanthamoeba polyphaga (Amoeba).